The chain runs to 303 residues: Diacylglycerol kinase (303 aa).

The DAGKc domain maps to 1 to 132 (MKRARIIYNP…IDIGQVNGQY (132 aa)). ATP contacts are provided by residues 9–13 (NPTSG), threonine 40, 66–72 (GDGTINE), and threonine 93. Mg(2+)-binding residues include serine 213, aspartate 216, and methionine 218. Glutamate 273 serves as the catalytic Proton acceptor.

The protein belongs to the diacylglycerol/lipid kinase family. It depends on Mg(2+) as a cofactor.

It catalyses the reaction a 1,2-diacyl-sn-glycerol + ATP = a 1,2-diacyl-sn-glycero-3-phosphate + ADP + H(+). It carries out the reaction 1,2-di-(9Z-octadecenoyl)-sn-glycerol + ATP = 1,2-di-(9Z-octadecenoyl)-sn-glycero-3-phosphate + ADP + H(+). Functionally, catalyzes the phosphorylation of diacylglycerol (DAG) into phosphatidic acid. Is a key enzyme involved in the production of lipoteichoic acid by reintroducing DAG formed from the breakdown of membrane phospholipids into the phosphatidylglycerol biosynthetic pathway. Is more active toward long-chain DAG compared with short-chain DAG. Is not able to phosphorylate substrates other than DAG, such as monoacylglycerol, ceramide, undecaprenol, phosphatidylinositol, or sphingosine. This Bacillus subtilis (strain 168) protein is Diacylglycerol kinase (dagK).